We begin with the raw amino-acid sequence, 472 residues long: Replicative helicase loading/DNA remodeling protein DnaB (472 aa).

Positions 1–112 (MADYWKDVLP…ERLFIYELLP (112 aa)) are DDBH1. Positions 210–302 (DLFLAGLSET…VHLREGEQPA (93 aa)) are DDBH2-1. The tract at residues 303–411 (EEDSLDGKLI…RQYLEWAEGK (109 aa)) is DDBH2-2. Residues 415–472 (SKRNQKVIREEKLPDWMTEKETASDSESGQQKLHPQDLEEQKKKMMEEMQKLKKYSAY) are disordered. 2 stretches are compositionally biased toward basic and acidic residues: residues 421 to 437 (VIREEKLPDWMTEKETA) and 448 to 465 (HPQDLEEQKKKMMEEMQK).

This sequence belongs to the DnaB/DnaD family. In terms of assembly, homotetramer. Also forms higher-order oligomers, can be induced by some ssDNA. The DNA replisome assembles sequentially on oriC in this order; DnaA, DnaD, DnaB, DnaI-DnaC helicase. In atomic force microscopy forms a square with a small central hole. Part of the replication restart primosome which assembles in this order; PriA, DnaD then DnaB. The preferred DNA substrate mimics an arrested DNA replication fork with unreplicated lagging strand. Interacts with DnaC, but probably not as a tetramer. Interacts with DnaD but no interaction with PriA was seen. Interacts with cell cycle regulator CcrZ. In early growth phase only full-length protein is detected, during late growth and stationary phase full-length and C-terminally truncated proteins are seen (at protein level). Truncated protein is only seen in cytoplasmic fractions.

Its subcellular location is the cytoplasm. The protein resides in the cell membrane. Its function is as follows. Helps DnaI load the DnaC replicative helicase onto single-stranded (ss)DNA. During DNA replication from the origin of replication (oriC) in the DNA replisome, DnaD is required after DnaA, before DnaB and before subsequent helicase DnaC loading. Component of the replication restart primosome, which reloads the replicative helicase on sites other than oriC. DnaB, DnaD and DnaI may also be required for a PriA-independent pathway of replication fork restart. DnaB and DnaD work together to allow DnaB access to ssDNA. DNA replication at oriC might originate on the inner face of the cell membrane; DnaB is essential for both replication initiation and cell membrane attachment of the origin region of the chromosome and plasmids. Weakly binds ssDNA, preferentially binds double-stranded (ds)DNA, and replication fork-like substrates. Remodels DNA, laterally compacts supercoiled plasmid and linear DNA, forms beads along the dsDNA. Together DnaB and DnaD form bipolar complexes on plasmid DNA. DnaB and DnaD are also required to load helicase on the repN plasmid origin of replication (oriN). The protein is Replicative helicase loading/DNA remodeling protein DnaB of Bacillus subtilis (strain 168).